The primary structure comprises 60 residues: Large ribosomal subunit protein uL30 (60 aa).

It belongs to the universal ribosomal protein uL30 family. Part of the 50S ribosomal subunit.

In Burkholderia mallei (strain NCTC 10247), this protein is Large ribosomal subunit protein uL30.